The chain runs to 401 residues: MSLPSPWRADFPAFSAFAAEGLTYLDSAATAQKPQAVLDALNGYYLGGAANVHRAQHVPGERATRAFEAARSRVAHWLHAGNPAEVLFTRGTTEAINLVAYGLERHFRPGDELLVSALEHHANLLPWQQLALRRGLVLRVLPLDERGVIDLEQARHIIGERTRLLAISQLSNVLGTWQPVVELIQLARERGAWTLVDGAQGSVHGRHDLPGLGCDFYAFSGHKLYGPDGIGVLWGRPQALEQLAHWQFGGEMVRHTGFHEASFHAAPLGFEAGTPAVSAAIGLGATIDWLATLDEAEVAAHEGALHARLLAGLLARDGVSLLGEPQAALASFCVDGVHVADLAHLLGEQGIAVRAGHHCAMPLLQRLEVPGALRVSLGLYNDADDLERFFLALDRSLELLR.

Lys223 carries the N6-(pyridoxal phosphate)lysine modification.

Belongs to the class-V pyridoxal-phosphate-dependent aminotransferase family. Csd subfamily. It depends on pyridoxal 5'-phosphate as a cofactor.

The catalysed reaction is (sulfur carrier)-H + L-cysteine = (sulfur carrier)-SH + L-alanine. Catalyzes the removal of elemental sulfur and selenium atoms from L-cysteine, L-cystine, L-selenocysteine, and L-selenocystine to produce L-alanine. The protein is Probable cysteine desulfurase (csd) of Pseudomonas aeruginosa (strain ATCC 15692 / DSM 22644 / CIP 104116 / JCM 14847 / LMG 12228 / 1C / PRS 101 / PAO1).